The following is a 435-amino-acid chain: Serine carboxypeptidase-like 14 (435 aa).

The N-terminal stretch at Met1–Ser23 is a signal peptide. 3 disulfide bridges follow: Cys82/Cys325, Cys246/Cys260, and Cys284/Cys291. An N-linked (GlcNAc...) asparagine glycan is attached at Asn103. Residue Ser178 is part of the active site. Asn344 carries N-linked (GlcNAc...) asparagine glycosylation. Asp360 is a catalytic residue. N-linked (GlcNAc...) asparagine glycosylation occurs at Asn376. His413 is an active-site residue.

It belongs to the peptidase S10 family. Expressed in senescent leaves.

The protein localises to the secreted. In terms of biological role, probable carboxypeptidase. The protein is Serine carboxypeptidase-like 14 (SCPL14) of Arabidopsis thaliana (Mouse-ear cress).